Here is a 445-residue protein sequence, read N- to C-terminus: MARLFGTDGVRGVANRELTAELAMALGAAAARRLGRTGAARRRVAVVGRDPRASGEMLEAAVIAGIASEGVDTLRVGVLPTPAVAYLTSAYDADFGVMISASHNPMPDNGIKIFGPGGHKLDDATEDRIEELVHQGPGSRPTGAGIGRVVDAEDALERYLRHVGKAATTRLDALTVVVDCAHGAASLAAPRAYRAAGANVIPIHAEPDGLNINDNCGSTHMQALSAAVVSYGADLGLAHDGDADRCLAVDAHGRVIDGDAIMVVLALAMQEAGELASDTLVTTVMSNMGLHLAMRSAGIEVRTTGVGDRYVLEELRAGLFSLGGEQSGHIVLPSFGTTGDGIVTGLRLMARMAQTGRSLAGLAEPMQTLPQVLINVEVADKATVADAQPVRDAVAQVEAELGDTGRILLRPSGTEQVVRVMVEAADEDTARQMAVRVAESVSAQR.

Residue Ser102 is the Phosphoserine intermediate of the active site. Mg(2+) contacts are provided by Ser102, Asp240, Asp242, and Asp244. Ser102 carries the phosphoserine modification.

This sequence belongs to the phosphohexose mutase family. Mg(2+) serves as cofactor. Post-translationally, activated by phosphorylation.

The catalysed reaction is alpha-D-glucosamine 1-phosphate = D-glucosamine 6-phosphate. Its function is as follows. Catalyzes the conversion of glucosamine-6-phosphate to glucosamine-1-phosphate. The polypeptide is Phosphoglucosamine mutase (Mycolicibacterium vanbaalenii (strain DSM 7251 / JCM 13017 / BCRC 16820 / KCTC 9966 / NRRL B-24157 / PYR-1) (Mycobacterium vanbaalenii)).